A 171-amino-acid polypeptide reads, in one-letter code: uncharacterized protein (171 aa).

2 disordered regions span residues 1–50 and 71–91; these read MSHR…THLS and RIDK…PMMK.

This is an uncharacterized protein from Caenorhabditis elegans.